The primary structure comprises 508 residues: DASH complex subunit ASK1 (508 aa).

Disordered stretches follow at residues 86-138 (LVDG…TLSS) and 150-355 (SRAA…QLRS). The segment covering 116–138 (EPSQYTPRPQTSAGGHDTTTLSS) has biased composition (polar residues). Positions 161–175 (QHHDDSSVLTDRDGD) are enriched in basic and acidic residues. Acidic residues predominate over residues 201–213 (DEMDIDMDEEDSE). A compositionally biased stretch (basic and acidic residues) spans 229 to 238 (RYYDDDHGFE). Residues 239 to 258 (QGEEEEDEEEEEEEEEEEEG) show a composition bias toward acidic residues. Residues 326–338 (IKQEDTEKKRPLW) are compositionally biased toward basic and acidic residues.

Belongs to the DASH complex ASK1 family. Component of the DASH complex consisting of ASK1, DAD1, DAD2, DAD3, DAD4, DAM1, DUO1, HSK3, SPC19 and SPC34, with a stoichiometry of one copy of each subunit per complex. Multiple DASH complexes oligomerize to form a ring that encircles spindle microtubules and organizes the rod-like NDC80 complexes of the outer kinetochore. On cytoplasmic microtubules, DASH complexes appear to form patches instead of rings.

Its subcellular location is the chromosome. It localises to the centromere. The protein resides in the kinetochore. The protein localises to the cytoplasm. It is found in the cytoskeleton. Its subcellular location is the spindle. It localises to the nucleus. In terms of biological role, component of the DASH complex that connects microtubules with kinetochores and couples microtubule depolymerisation to chromosome movement; it is involved in retrieving kinetochores to the spindle poles before their re-orientation on the spindle in early mitosis and allows microtubule depolymerization to pull chromosomes apart and resist detachment during anaphase. Kinetochores, consisting of a centromere-associated inner segment and a microtubule-contacting outer segment, play a crucial role in chromosome segregation by mediating the physical connection between centromeric DNA and microtubules. Kinetochores also serve as an input point for the spindle assembly checkpoint, which delays anaphase until all chromosomes have bioriented on the mitotic spindle. The protein is DASH complex subunit ASK1 of Chaetomium thermophilum (strain DSM 1495 / CBS 144.50 / IMI 039719) (Thermochaetoides thermophila).